A 392-amino-acid chain; its full sequence is Cell division protein DivIB (392 aa).

Positions Met-1 to Glu-87 are disordered. At Met-1–Met-131 the chain is on the cytoplasmic side. The span at Lys-14–Ala-32 shows a compositional bias: basic and acidic residues. The span at Thr-58–Asn-76 shows a compositional bias: acidic residues. A helical membrane pass occupies residues Trp-132–Leu-152. One can recognise a POTRA domain in the interval Ser-153–His-224. Topologically, residues Ser-153–Asn-392 are extracellular. Positions Ile-368–Asn-392 are disordered.

Belongs to the FtsQ/DivIB family. DivIB subfamily.

It localises to the cell membrane. Functionally, cell division protein that may be involved in stabilizing or promoting the assembly of the division complex. The sequence is that of Cell division protein DivIB from Lactococcus lactis subsp. lactis (strain IL1403) (Streptococcus lactis).